Consider the following 972-residue polypeptide: MERMNWLSRLASRGPGHRIPQGANLQTPVMADPETCLMVFKNHWSQVVRILERQGPRAAPGGADDLSAVRNHTYQMLTLLAEDRAVPSAPTGPGPLLEFAPHEDLLTRVLTWQLQWGELGDGVEERRAEQLKLFEMLVSEARQPLLQHGPVREALLTLLDACGRPVPSSPALDEGLVLLLSQLCVCVAQEPSLLEFFLQPPPEPGAAPRLLLFSRLVPFVHREGTLGQQARDALPLLMALSAGSPTVGRYIADHSYFCPVLATGLSALYSSLPRRIEVPGDDWHCLRREDWLGVPALALFMSSLEFCNAVIQVAHPLVQKQLVDYIHNGFLVPVMGPALHKTSVEEMIASTAYLELFLRSISEPALLRTFLRFLLLHRHDTHTILDTLVARIGSNSRLCMVSLSLFRTLLNLSCEDVLLQLVLRYLVPCNHVMLSQKPAVRDVDLYGRAADKFLSLIPRCCRHHAPSPPRPEHASWARGPGSPSVDSSSVMTVPRPSTPSRLALFLRQQSLSGSESPGPAPCSPGLSASPASSPGRRPTPAEEAGELEDNYLEYQREARRGVDHCVRACRTWSAPYDGERPSPEPSPFGSRTKKRSLLPEEDRNNVGEGEEEELGSRGLAGGAGEGPGHLPPPQLNGVPGSWPEGAKRVRLVPKEGVGELLEGISEGMAGLEGFGQELRELEVALSNGGTGSESPLEPPLPLEEEEAYESFTCPPEPPGPFLNSPLRTPNQLPSQPFTGPFMAVLFAKLENMLQNSVYVNFLLTGLVAQLACHPQPLLRSFLLNTNMVFQPSVKSLLQVLGSVKNKIENFAASQEDFPALLSKAKKYLIARGKLDWAEGPAAGPAPRRSDPLVKSRRPSLGELLLRHARSPTRARQAAQLVLQPGRDGAGLGLSGGSPGASTPVLPTRGGAPERQGEALRVKNAVYCAVIFPEFLKELAAISQAHAVTSPFLLETSEEGSGPLISGCGPLNP.

Disordered regions lie at residues 465–496 (APSP…VPRP), 510–547 (SLSG…AGEL), 573–642 (SAPY…PGSW), and 710–733 (SFTC…NQLP). Phosphoserine is present on Ser-467. Over residues 479 to 490 (GPGSPSVDSSSV) the composition is skewed to low complexity. Phosphoserine occurs at positions 510, 523, 529, and 533. A compositionally biased stretch (low complexity) spans 523–535 (SPGLSASPASSPG). Residues 618–627 (GLAGGAGEGP) are compositionally biased toward gly residues. Phosphoserine is present on residues Ser-859 and Ser-897.

Belongs to the FHIP family. In terms of assembly, component of the FTS/Hook/FHIP complex (FHF complex), composed of AKTIP/FTS, FHIP1B, and one or more members of the Hook family of proteins HOOK1, HOOK2, and HOOK3. The FHF complex associates with the homotypic vesicular sorting complex (the HOPS complex).

Its function is as follows. Component of the FTS/Hook/FHIP complex (FHF complex). The FHF complex may function to promote vesicle trafficking and/or fusion via the homotypic vesicular protein sorting complex (the HOPS complex). FHF complex promotes the distribution of AP-4 complex to the perinuclear area of the cell. The polypeptide is FHF complex subunit HOOK-interacting protein 1B (FHIP1B) (Pongo abelii (Sumatran orangutan)).